The primary structure comprises 459 residues: UDP-N-acetylmuramoylalanine--D-glutamate ligase (459 aa).

120-126 contributes to the ATP binding site; sequence GSNGKTT.

It belongs to the MurCDEF family.

The protein resides in the cytoplasm. It carries out the reaction UDP-N-acetyl-alpha-D-muramoyl-L-alanine + D-glutamate + ATP = UDP-N-acetyl-alpha-D-muramoyl-L-alanyl-D-glutamate + ADP + phosphate + H(+). The protein operates within cell wall biogenesis; peptidoglycan biosynthesis. Its function is as follows. Cell wall formation. Catalyzes the addition of glutamate to the nucleotide precursor UDP-N-acetylmuramoyl-L-alanine (UMA). In Lactobacillus helveticus (strain DPC 4571), this protein is UDP-N-acetylmuramoylalanine--D-glutamate ligase.